The primary structure comprises 121 residues: UPF0102 protein Hhal_2103 (121 aa).

The segment at 1 to 20 is disordered; it reads MMAPQTTRNDPRQRGQEAEE. The segment covering 9–20 has biased composition (basic and acidic residues); that stretch reads NDPRQRGQEAEE.

The protein belongs to the UPF0102 family.

The protein is UPF0102 protein Hhal_2103 of Halorhodospira halophila (strain DSM 244 / SL1) (Ectothiorhodospira halophila (strain DSM 244 / SL1)).